A 468-amino-acid chain; its full sequence is ATP synthase subunit beta (468 aa).

Residue 155-162 participates in ATP binding; sequence GGAGVGKT.

This sequence belongs to the ATPase alpha/beta chains family. As to quaternary structure, F-type ATPases have 2 components, CF(1) - the catalytic core - and CF(0) - the membrane proton channel. CF(1) has five subunits: alpha(3), beta(3), gamma(1), delta(1), epsilon(1). CF(0) has three main subunits: a(1), b(2) and c(9-12). The alpha and beta chains form an alternating ring which encloses part of the gamma chain. CF(1) is attached to CF(0) by a central stalk formed by the gamma and epsilon chains, while a peripheral stalk is formed by the delta and b chains.

Its subcellular location is the cell membrane. It carries out the reaction ATP + H2O + 4 H(+)(in) = ADP + phosphate + 5 H(+)(out). Produces ATP from ADP in the presence of a proton gradient across the membrane. The catalytic sites are hosted primarily by the beta subunits. The sequence is that of ATP synthase subunit beta from Streptococcus sanguinis (strain SK36).